The sequence spans 225 residues: ATP synthase subunit a (225 aa).

Transmembrane regions (helical) follow at residues 18–38 (LSLNWTSTFLGLLLIPSMFWL), 73–93 (ILISIFIMMLFNNFMGLFPYI), 100–120 (MTLTFSIALPMWMSFMLFGWI), 126–146 (MFTHLVPQGTPNALMSFMVLI), 156–176 (GTLAVRLAANMIAGHLLLTLL), and 187–207 (IMLFLIIGQMLLLILESAVAM).

This sequence belongs to the ATPase A chain family. As to quaternary structure, F-type ATPases have 2 components, CF(1) - the catalytic core - and CF(0) - the membrane proton channel. CF(1) has five subunits: alpha(3), beta(3), gamma(1), delta(1), epsilon(1). CF(0) has three main subunits: a, b and c.

Its subcellular location is the mitochondrion inner membrane. Its function is as follows. Mitochondrial membrane ATP synthase (F(1)F(0) ATP synthase or Complex V) produces ATP from ADP in the presence of a proton gradient across the membrane which is generated by electron transport complexes of the respiratory chain. F-type ATPases consist of two structural domains, F(1) - containing the extramembraneous catalytic core and F(0) - containing the membrane proton channel, linked together by a central stalk and a peripheral stalk. During catalysis, ATP synthesis in the catalytic domain of F(1) is coupled via a rotary mechanism of the central stalk subunits to proton translocation. Key component of the proton channel; it may play a direct role in the translocation of protons across the membrane. The sequence is that of ATP synthase subunit a (ATP6) from Locusta migratoria (Migratory locust).